The following is a 449-amino-acid chain: Integrator complex subunit 15 (449 aa).

Belongs to the Integrator subunit 15 family. In terms of assembly, component of the Integrator complex, composed of core subunits INTS1, INTS2, INTS3, INTS4, INTS5, INTS6, INTS7, INTS8, INTS9/RC74, INTS10, INTS11/CPSF3L, INTS12, INTS13, INTS14 and INTS15. The core complex associates with protein phosphatase 2A subunits PPP2CA and PPP2R1A, to form the Integrator-PP2A (INTAC) complex. INTS15 is part of the tail subcomplex, composed of INTS10, INTS13, INTS14 and INTS15.

It localises to the nucleus. It is found in the chromosome. Its function is as follows. Component of the integrator complex, a multiprotein complex that terminates RNA polymerase II (Pol II) transcription in the promoter-proximal region of genes. The integrator complex provides a quality checkpoint during transcription elongation by driving premature transcription termination of transcripts that are unfavorably configured for transcriptional elongation: the complex terminates transcription by (1) catalyzing dephosphorylation of the C-terminal domain (CTD) of Pol II subunit POLR2A/RPB1 and SUPT5H/SPT5, (2) degrading the exiting nascent RNA transcript via endonuclease activity and (3) promoting the release of Pol II from bound DNA. The integrator complex is also involved in terminating the synthesis of non-coding Pol II transcripts, such as enhancer RNAs (eRNAs), small nuclear RNAs (snRNAs), telomerase RNAs and long non-coding RNAs (lncRNAs). INTS15 is part of the integrator tail module that acts as a platform for the recruitment of transcription factors at promoters. Within the integrator complex, INTS15 is required to bridge different integrator modules. This is Integrator complex subunit 15 from Homo sapiens (Human).